A 242-amino-acid polypeptide reads, in one-letter code: MDIKLKDFEGPLDLLLHLVSKYQMDIYDVPITEVIEQYLAYVSTLQAMRLEVTGEYMVMASQLMLIKSRKLLPKVAEVTDLGDDLEQDLLSQIEEYRKFKLLGEHLEAKHQERAQYYSKAPTELIYEDAELVHDKTTIDLFLTFSNILAKKKEEFAQNHTTILRDEYKIEDMMIIVKESLIGRDQLRLQDLFKEAQNVQEVITLFLATLELIKTQELILVQEESFGDIYLMEKKEESQVPQS.

The protein belongs to the ScpA family. In terms of assembly, component of a cohesin-like complex composed of ScpA, ScpB and the Smc homodimer, in which ScpA and ScpB bind to the head domain of Smc. The presence of the three proteins is required for the association of the complex with DNA.

Its subcellular location is the cytoplasm. Functionally, participates in chromosomal partition during cell division. May act via the formation of a condensin-like complex containing Smc and ScpB that pull DNA away from mid-cell into both cell halves. This Streptococcus pneumoniae serotype 4 (strain ATCC BAA-334 / TIGR4) protein is Segregation and condensation protein A.